Reading from the N-terminus, the 350-residue chain is Biotin synthase (350 aa).

The Radical SAM core domain maps to 41–268; that stretch reads NEVQISRLLS…KSRVRLSAGR (228 aa). [4Fe-4S] cluster is bound by residues cysteine 56, cysteine 60, and cysteine 63. Residues cysteine 100, cysteine 131, cysteine 191, and arginine 263 each contribute to the [2Fe-2S] cluster site.

Belongs to the radical SAM superfamily. Biotin synthase family. In terms of assembly, homodimer. [4Fe-4S] cluster is required as a cofactor. Requires [2Fe-2S] cluster as cofactor.

The catalysed reaction is (4R,5S)-dethiobiotin + (sulfur carrier)-SH + 2 reduced [2Fe-2S]-[ferredoxin] + 2 S-adenosyl-L-methionine = (sulfur carrier)-H + biotin + 2 5'-deoxyadenosine + 2 L-methionine + 2 oxidized [2Fe-2S]-[ferredoxin]. The protein operates within cofactor biosynthesis; biotin biosynthesis; biotin from 7,8-diaminononanoate: step 2/2. Catalyzes the conversion of dethiobiotin (DTB) to biotin by the insertion of a sulfur atom into dethiobiotin via a radical-based mechanism. This Shewanella frigidimarina (strain NCIMB 400) protein is Biotin synthase.